The sequence spans 463 residues: Asparagine--tRNA ligase (463 aa).

Belongs to the class-II aminoacyl-tRNA synthetase family. As to quaternary structure, homodimer.

The protein localises to the cytoplasm. The catalysed reaction is tRNA(Asn) + L-asparagine + ATP = L-asparaginyl-tRNA(Asn) + AMP + diphosphate + H(+). The chain is Asparagine--tRNA ligase from Clostridium kluyveri (strain ATCC 8527 / DSM 555 / NBRC 12016 / NCIMB 10680 / K1).